Reading from the N-terminus, the 194-residue chain is Holliday junction branch migration complex subunit RuvA (194 aa).

The domain I stretch occupies residues 1-61 (MIASLSGLLE…EDSVSLYGFA (61 aa)). The interval 62–136 (SVLECTVFEQ…GKLTSVPLEN (75 aa)) is domain II. Residues 136–140 (NRKQE) are flexible linker. Residues 141 to 194 (QAVDRSAEIVQALIGLGWQRQESAAAVESVLEKDQSLTMPEILRNALRYLAKQE) form a domain III region.

This sequence belongs to the RuvA family. Homotetramer. Forms an RuvA(8)-RuvB(12)-Holliday junction (HJ) complex. HJ DNA is sandwiched between 2 RuvA tetramers; dsDNA enters through RuvA and exits via RuvB. An RuvB hexamer assembles on each DNA strand where it exits the tetramer. Each RuvB hexamer is contacted by two RuvA subunits (via domain III) on 2 adjacent RuvB subunits; this complex drives branch migration. In the full resolvosome a probable DNA-RuvA(4)-RuvB(12)-RuvC(2) complex forms which resolves the HJ.

It is found in the cytoplasm. Its function is as follows. The RuvA-RuvB-RuvC complex processes Holliday junction (HJ) DNA during genetic recombination and DNA repair, while the RuvA-RuvB complex plays an important role in the rescue of blocked DNA replication forks via replication fork reversal (RFR). RuvA specifically binds to HJ cruciform DNA, conferring on it an open structure. The RuvB hexamer acts as an ATP-dependent pump, pulling dsDNA into and through the RuvAB complex. HJ branch migration allows RuvC to scan DNA until it finds its consensus sequence, where it cleaves and resolves the cruciform DNA. This Tropheryma whipplei (strain Twist) (Whipple's bacillus) protein is Holliday junction branch migration complex subunit RuvA.